Reading from the N-terminus, the 334-residue chain is Holliday junction branch migration complex subunit RuvB (334 aa).

The large ATPase domain (RuvB-L) stretch occupies residues 4–184; that stretch reads ADRLISAEPI…FGIVQRLEFY (181 aa). ATP contacts are provided by residues I23, R24, G65, K68, T69, T70, 131–133, R174, Y184, and R221; that span reads EDY. T69 is a Mg(2+) binding site. Residues 185-255 form a small ATPAse domain (RuvB-S) region; the sequence is QVADLQHIVS…VAMQALDMLN (71 aa). A head domain (RuvB-H) region spans residues 258–334; the sequence is AEGFDYMDRK…YKHFGMVREE (77 aa). DNA-binding residues include R294, R313, and R318.

Belongs to the RuvB family. As to quaternary structure, homohexamer. Forms an RuvA(8)-RuvB(12)-Holliday junction (HJ) complex. HJ DNA is sandwiched between 2 RuvA tetramers; dsDNA enters through RuvA and exits via RuvB. An RuvB hexamer assembles on each DNA strand where it exits the tetramer. Each RuvB hexamer is contacted by two RuvA subunits (via domain III) on 2 adjacent RuvB subunits; this complex drives branch migration. In the full resolvosome a probable DNA-RuvA(4)-RuvB(12)-RuvC(2) complex forms which resolves the HJ.

It localises to the cytoplasm. It carries out the reaction ATP + H2O = ADP + phosphate + H(+). In terms of biological role, the RuvA-RuvB-RuvC complex processes Holliday junction (HJ) DNA during genetic recombination and DNA repair, while the RuvA-RuvB complex plays an important role in the rescue of blocked DNA replication forks via replication fork reversal (RFR). RuvA specifically binds to HJ cruciform DNA, conferring on it an open structure. The RuvB hexamer acts as an ATP-dependent pump, pulling dsDNA into and through the RuvAB complex. RuvB forms 2 homohexamers on either side of HJ DNA bound by 1 or 2 RuvA tetramers; 4 subunits per hexamer contact DNA at a time. Coordinated motions by a converter formed by DNA-disengaged RuvB subunits stimulates ATP hydrolysis and nucleotide exchange. Immobilization of the converter enables RuvB to convert the ATP-contained energy into a lever motion, pulling 2 nucleotides of DNA out of the RuvA tetramer per ATP hydrolyzed, thus driving DNA branch migration. The RuvB motors rotate together with the DNA substrate, which together with the progressing nucleotide cycle form the mechanistic basis for DNA recombination by continuous HJ branch migration. Branch migration allows RuvC to scan DNA until it finds its consensus sequence, where it cleaves and resolves cruciform DNA. The polypeptide is Holliday junction branch migration complex subunit RuvB (Serratia proteamaculans (strain 568)).